The sequence spans 332 residues: Leucine carboxyl methyltransferase 1 (332 aa).

Residues methionine 1–glycine 23 form a disordered region. Residues arginine 71, glycine 96, aspartate 120, aspartate 169–leucine 170, and glutamate 196 contribute to the S-adenosyl-L-methionine site.

The protein belongs to the methyltransferase superfamily. LCMT family.

The enzyme catalyses [phosphatase 2A protein]-C-terminal L-leucine + S-adenosyl-L-methionine = [phosphatase 2A protein]-C-terminal L-leucine methyl ester + S-adenosyl-L-homocysteine. Its function is as follows. Methylates the carboxyl group of the C-terminal leucine residue of protein phosphatase 2A catalytic subunits to form alpha-leucine ester residues. This chain is Leucine carboxyl methyltransferase 1 (LCMT1), found in Bos taurus (Bovine).